A 317-amino-acid polypeptide reads, in one-letter code: MEKVYVAGAIPEVGLKLLQEHFEVEMYEGKGLVDKDTLIKGVKNATALISLLSTNVDKDVIDAGKDLKIIANYGAGFNNIDIEYAREKSIDVTNTPKASTNATADLTIGLVLAIARRIVEGDQLSRTTGFDGWAPLFFRGREVSGKTIGIIGLGEIGSAVARRARAFDMDVLYTGPNRKEEKEREIGAKYVDLDTLLKNADFITINAAYNPKMHHLIDTEQFKMMKSTAYLINASRGPIVHEQALVQALKDNEIEGAALDVYEFEPDITDDLKSLNNVVLTPHIGNATFEARDMMSKIVANAAISAVQGEKPQFVVN.

NAD(+)-binding positions include 155-156, 234-236, and Asp260; these read EI and ASR. The active site involves Arg236. Residue Glu265 is part of the active site. His283 (proton donor) is an active-site residue. 283–286 serves as a coordination point for NAD(+); the sequence is HIGN.

Belongs to the D-isomer specific 2-hydroxyacid dehydrogenase family.

This chain is Putative 2-hydroxyacid dehydrogenase SAB2178, found in Staphylococcus aureus (strain bovine RF122 / ET3-1).